The primary structure comprises 209 residues: MRKKPIIIGVTGGSGGGKTSVSRAILSNFPDQKITMIEHDSYYKDQSHLTFEERVKTNYDHPLAFDTNLMIEQLNELIEGRPVDIPVYDYTKHTRSDRTIRQDPQDVIIVEGILVLEDQRLRDLMDIKLFVDTDDDIRIIRRIKRDMEERDRSLDSIIEQYTEVVKPMYHQFIEPTKRYADIVIPEGVSNIVAIDLINTKVASILNEAK.

12–19 (GGSGGGKT) contributes to the ATP binding site.

Belongs to the uridine kinase family.

It localises to the cytoplasm. It catalyses the reaction uridine + ATP = UMP + ADP + H(+). It carries out the reaction cytidine + ATP = CMP + ADP + H(+). Its pathway is pyrimidine metabolism; CTP biosynthesis via salvage pathway; CTP from cytidine: step 1/3. The protein operates within pyrimidine metabolism; UMP biosynthesis via salvage pathway; UMP from uridine: step 1/1. The sequence is that of Uridine kinase from Streptococcus agalactiae serotype III (strain NEM316).